We begin with the raw amino-acid sequence, 351 residues long: Cardiolipin synthase (CMP-forming) (351 aa).

The interval 74–120 is disordered; that stretch reads PAPQLSASHQHQAQQQQQQTKQPQQPYDPQQDQVPSTSTASSSKPAA. The segment covering 76–120 has biased composition (low complexity); it reads PQLSASHQHQAQQQQQQTKQPQQPYDPQQDQVPSTSTASSSKPAA. Helical transmembrane passes span 139–159, 191–211, 251–271, 280–300, and 321–341; these read PLIGYWLVQGHYEAATLALAV, VLIGCVAAALLMNGAMPGWVA, AAAAGAATGAANGVASGGGGG, PLLISKANTVLQLLLLGGYLL, and LIMGLELATAATTVASGLAYG.

The protein belongs to the CDP-alcohol phosphatidyltransferase class-I family. Requires Mn(2+) as cofactor.

It localises to the mitochondrion inner membrane. It catalyses the reaction a CDP-1,2-diacyl-sn-glycerol + a 1,2-diacyl-sn-glycero-3-phospho-(1'-sn-glycerol) = a cardiolipin + CMP + H(+). In terms of biological role, catalyzes the synthesis of cardiolipin (CL) (diphosphatidylglycerol) by specifically transferring a phosphatidyl group from CDP-diacylglycerol to phosphatidylglycerol (PG). CL is a key phospholipid in mitochondrial membranes and plays important roles in maintaining the functional integrity and dynamics of mitochondria under both optimal and stress conditions. Cannot catalyze the phosphatidyl group transfer from one PG molecule to another to form CL. The chain is Cardiolipin synthase (CMP-forming) from Chlamydomonas reinhardtii (Chlamydomonas smithii).